The chain runs to 796 residues: Ent-copalyl diphosphate synthase 4 (796 aa).

Residues 1–23 (MSSSSIVTSLLRPTTAADGVLPR) constitute a chloroplast transit peptide. K240 lines the substrate pocket. Mg(2+) is bound by residues D371 and D373. The DXDD motif signature appears at 371–374 (DVDD). K457 lines the substrate pocket.

The protein belongs to the terpene synthase family. Tpsc subfamily. Mg(2+) serves as cofactor. In terms of tissue distribution, highly expressed in leaves, and, at low levels, in stems, but barely in roots and flowers.

The protein localises to the plastid. It localises to the chloroplast. It carries out the reaction (2E,6E,10E)-geranylgeranyl diphosphate = ent-copalyl diphosphate. Its pathway is secondary metabolite biosynthesis; terpenoid biosynthesis. In terms of biological role, involved in the biosynthesis of ent-kaurene diterpenoids natural products such as oridonin, miltiradiene, eriocalyxin B and nezukol, known to exhibit antitumor, anti-inflammatory and antibacterial activities. Catalyzes the conversion of (2E,6E,10E)-geranylgeranyl diphosphate (GGPP) to ent-copalyl diphosphate (ent-CPP). This is Ent-copalyl diphosphate synthase 4 from Isodon rubescens (Rabdosia rubescens).